Here is a 155-residue protein sequence, read N- to C-terminus: Small ribosomal subunit protein uS7 (155 aa).

The protein belongs to the universal ribosomal protein uS7 family. In terms of assembly, part of the 30S ribosomal subunit. Contacts proteins S9 and S11.

In terms of biological role, one of the primary rRNA binding proteins, it binds directly to 16S rRNA where it nucleates assembly of the head domain of the 30S subunit. Is located at the subunit interface close to the decoding center, probably blocks exit of the E-site tRNA. This chain is Small ribosomal subunit protein uS7, found in Desulforapulum autotrophicum (strain ATCC 43914 / DSM 3382 / VKM B-1955 / HRM2) (Desulfobacterium autotrophicum).